A 420-amino-acid chain; its full sequence is Mitochondrial chaperone BCS1 (420 aa).

Residues 1-15 (MTLSDFIGALKDNPY) lie on the Mitochondrial intermembrane side of the membrane. Residues 16 to 32 (FGAGFGLVGVGTALAVA) traverse the membrane as a helical segment. The Mitochondrial matrix portion of the chain corresponds to 33-420 (RKGAQVGMIF…AIKNIAEIKD (388 aa)). Position 230–237 (230–237 (GPPGCGKS)) interacts with ATP.

Belongs to the AAA ATPase family. BCS1 subfamily.

It is found in the mitochondrion inner membrane. The enzyme catalyses ATP + H2O = ADP + phosphate + H(+). In terms of biological role, chaperone necessary for the incorporation of Rieske iron-sulfur protein uqcrfs1 into the mitochondrial respiratory chain complex III. This chain is Mitochondrial chaperone BCS1 (bcs1l), found in Danio rerio (Zebrafish).